The chain runs to 208 residues: Uracil phosphoribosyltransferase (208 aa).

Residues arginine 78, arginine 103, and aspartate 130–serine 138 each bind 5-phospho-alpha-D-ribose 1-diphosphate. Residues isoleucine 193 and glycine 198 to alanine 200 each bind uracil. Position 199 (aspartate 199) interacts with 5-phospho-alpha-D-ribose 1-diphosphate.

This sequence belongs to the UPRTase family. Mg(2+) serves as cofactor.

The enzyme catalyses UMP + diphosphate = 5-phospho-alpha-D-ribose 1-diphosphate + uracil. The protein operates within pyrimidine metabolism; UMP biosynthesis via salvage pathway; UMP from uracil: step 1/1. Allosterically activated by GTP. In terms of biological role, catalyzes the conversion of uracil and 5-phospho-alpha-D-ribose 1-diphosphate (PRPP) to UMP and diphosphate. The chain is Uracil phosphoribosyltransferase from Brucella canis (strain ATCC 23365 / NCTC 10854 / RM-666).